A 124-amino-acid polypeptide reads, in one-letter code: Large ribosomal subunit protein uL18 (124 aa).

It belongs to the universal ribosomal protein uL18 family. In terms of assembly, part of the 50S ribosomal subunit; part of the 5S rRNA/L5/L18/L25 subcomplex. Contacts the 5S and 23S rRNAs.

In terms of biological role, this is one of the proteins that bind and probably mediate the attachment of the 5S RNA into the large ribosomal subunit, where it forms part of the central protuberance. The polypeptide is Large ribosomal subunit protein uL18 (Desulfosudis oleivorans (strain DSM 6200 / JCM 39069 / Hxd3) (Desulfococcus oleovorans)).